A 71-amino-acid polypeptide reads, in one-letter code: Large ribosomal subunit protein bL31 (71 aa).

Zn(2+) is bound by residues cysteine 16, cysteine 18, cysteine 36, and cysteine 39.

Belongs to the bacterial ribosomal protein bL31 family. Type A subfamily. As to quaternary structure, part of the 50S ribosomal subunit. Zn(2+) is required as a cofactor.

Its function is as follows. Binds the 23S rRNA. The polypeptide is Large ribosomal subunit protein bL31 (Syntrophus aciditrophicus (strain SB)).